A 105-amino-acid polypeptide reads, in one-letter code: uncharacterized protein (105 aa).

Residues 29 to 49 (NAFLLILSEAYLLFVFLSYLI) traverse the membrane as a helical segment.

Its subcellular location is the membrane. This is an uncharacterized protein from Saccharomyces cerevisiae (strain ATCC 204508 / S288c) (Baker's yeast).